The chain runs to 222 residues: Transmembrane reductase CYB561D2 (222 aa).

The Cytoplasmic segment spans residues 2–17; it reads ALSAETESHIYRALRT. Residues 14–217 enclose the Cytochrome b561 domain; sequence ALRTASGAAA…NQVSNAYLYR (204 aa). The chain crosses the membrane as a helical span at residues 18–38; the sequence is ASGAAAHLVALGFTIFVAVLA. Residues 39-46 lie on the Lumenal side of the membrane; that stretch reads RPGSSLFS. The helical transmembrane segment at 47-67 threads the bilayer; sequence WHPVLMSLAFSFLMTEALLVF. Histidine 48 lines the heme b pocket. Residues 68 to 85 are Cytoplasmic-facing; sequence SPESSLLHSLSRKGRARC. 2 residues coordinate heme b: histidine 86 and histidine 120. A helical membrane pass occupies residues 86-106; the sequence is HWVLQLLALLCALLGLGLVIL. Over 107 to 122 the chain is Lumenal; that stretch reads HKEQLGKAHLVTRHGQ. A helical membrane pass occupies residues 123–143; that stretch reads AGLLAVLWAGLQCSGGVGLLY. Residues 144–162 are Cytoplasmic-facing; it reads PKLLPRWPLAKLKLYHATS. Histidine 159 contacts heme b. A helical transmembrane segment spans residues 163–183; that stretch reads GLVGYLLGSASLLLGMCSLWF. Over 184 to 186 the chain is Lumenal; it reads TAS. Residues 187–207 traverse the membrane as a helical segment; sequence VTGAAWYLAVLCPVLTSLVIM. At 208 to 222 the chain is on the cytoplasmic side; it reads NQVSNAYLYRKRIQP.

The cofactor is heme b.

It is found in the endoplasmic reticulum membrane. Its subcellular location is the cytoplasmic vesicle membrane. The enzyme catalyses monodehydro-L-ascorbate radical(out) + L-ascorbate(in) = monodehydro-L-ascorbate radical(in) + L-ascorbate(out). It catalyses the reaction Fe(3+)(out) + L-ascorbate(in) = monodehydro-L-ascorbate radical(in) + Fe(2+)(out) + H(+). Functionally, transmembrane reductase that may use ascorbate as an electron donor in the cytoplasm and transfer electrons across endoplasmic reticulum membranes to reduce monodehydro-L-ascorbate radical and iron cations Fe(3+) in the lumen of that compartment. The polypeptide is Transmembrane reductase CYB561D2 (Homo sapiens (Human)).